Here is a 183-residue protein sequence, read N- to C-terminus: Ribosome maturation factor RimP (183 aa).

Belongs to the RimP family.

The protein resides in the cytoplasm. In terms of biological role, required for maturation of 30S ribosomal subunits. In Mycobacterium bovis (strain ATCC BAA-935 / AF2122/97), this protein is Ribosome maturation factor RimP.